Reading from the N-terminus, the 345-residue chain is N-acetyl-gamma-glutamyl-phosphate reductase (345 aa).

The active site involves Cys-149.

The protein belongs to the NAGSA dehydrogenase family. Type 1 subfamily.

The protein localises to the cytoplasm. The catalysed reaction is N-acetyl-L-glutamate 5-semialdehyde + phosphate + NADP(+) = N-acetyl-L-glutamyl 5-phosphate + NADPH + H(+). It functions in the pathway amino-acid biosynthesis; L-arginine biosynthesis; N(2)-acetyl-L-ornithine from L-glutamate: step 3/4. Its function is as follows. Catalyzes the NADPH-dependent reduction of N-acetyl-5-glutamyl phosphate to yield N-acetyl-L-glutamate 5-semialdehyde. The chain is N-acetyl-gamma-glutamyl-phosphate reductase from Bacillus mycoides (strain KBAB4) (Bacillus weihenstephanensis).